Consider the following 796-residue polypeptide: Lon protease 2 (796 aa).

Residues 9-206 (LPIVILKENV…KLIVNLSIEI (198 aa)) form the Lon N-terminal domain. An ATP-binding site is contributed by 352–359 (GPPGIGKT). The 180-residue stretch at 617–796 (IDSSGFVYGL…EEVFDYLNII (180 aa)) folds into the Lon proteolytic domain. Residues serine 702 and lysine 745 contribute to the active site.

This sequence belongs to the peptidase S16 family. Homohexamer. Organized in a ring with a central cavity.

The protein resides in the cytoplasm. The enzyme catalyses Hydrolysis of proteins in presence of ATP.. Functionally, ATP-dependent serine protease that mediates the selective degradation of mutant and abnormal proteins as well as certain short-lived regulatory proteins. Required for cellular homeostasis and for survival from DNA damage and developmental changes induced by stress. Degrades polypeptides processively to yield small peptide fragments that are 5 to 10 amino acids long. Binds to DNA in a double-stranded, site-specific manner. The protein is Lon protease 2 (lon2) of Borreliella burgdorferi (strain ATCC 35210 / DSM 4680 / CIP 102532 / B31) (Borrelia burgdorferi).